The following is a 373-amino-acid chain: S-adenosylmethionine:tRNA ribosyltransferase-isomerase (373 aa).

Belongs to the QueA family. As to quaternary structure, monomer.

Its subcellular location is the cytoplasm. The catalysed reaction is 7-aminomethyl-7-carbaguanosine(34) in tRNA + S-adenosyl-L-methionine = epoxyqueuosine(34) in tRNA + adenine + L-methionine + 2 H(+). It participates in tRNA modification; tRNA-queuosine biosynthesis. In terms of biological role, transfers and isomerizes the ribose moiety from AdoMet to the 7-aminomethyl group of 7-deazaguanine (preQ1-tRNA) to give epoxyqueuosine (oQ-tRNA). The chain is S-adenosylmethionine:tRNA ribosyltransferase-isomerase from Rhizobium etli (strain CIAT 652).